Here is a 169-residue protein sequence, read N- to C-terminus: Ribonuclease H (169 aa).

The 157-residue stretch at 3 to 159 folds into the RNase H type-1 domain; sequence AHAALTLYTD…CDRLATDAAR (157 aa). Residues Asp12, Glu63, Asp87, and Asp151 each contribute to the Mg(2+) site.

This sequence belongs to the RNase H family. Monomer. Requires Mg(2+) as cofactor.

It localises to the cytoplasm. It carries out the reaction Endonucleolytic cleavage to 5'-phosphomonoester.. Its function is as follows. Endonuclease that specifically degrades the RNA of RNA-DNA hybrids. This is Ribonuclease H from Treponema pallidum subsp. pallidum (strain SS14).